Consider the following 290-residue polypeptide: 33 kDa chaperonin (290 aa).

2 disulfides stabilise this stretch: Cys235–Cys237 and Cys268–Cys271.

This sequence belongs to the HSP33 family. Under oxidizing conditions two disulfide bonds are formed involving the reactive cysteines. Under reducing conditions zinc is bound to the reactive cysteines and the protein is inactive.

It localises to the cytoplasm. Its function is as follows. Redox regulated molecular chaperone. Protects both thermally unfolding and oxidatively damaged proteins from irreversible aggregation. Plays an important role in the bacterial defense system toward oxidative stress. This chain is 33 kDa chaperonin, found in Streptococcus uberis (strain ATCC BAA-854 / 0140J).